We begin with the raw amino-acid sequence, 123 residues long: Holo-[acyl-carrier-protein] synthase (123 aa).

D8 and E60 together coordinate Mg(2+).

The protein belongs to the P-Pant transferase superfamily. AcpS family. The cofactor is Mg(2+).

It localises to the cytoplasm. It catalyses the reaction apo-[ACP] + CoA = holo-[ACP] + adenosine 3',5'-bisphosphate + H(+). Functionally, transfers the 4'-phosphopantetheine moiety from coenzyme A to a Ser of acyl-carrier-protein. This chain is Holo-[acyl-carrier-protein] synthase, found in Ehrlichia ruminantium (strain Welgevonden).